A 248-amino-acid chain; its full sequence is Ribonuclease PH (248 aa).

Residues Arg86 and 124–126 (GTR) each bind phosphate.

It belongs to the RNase PH family. In terms of assembly, homohexameric ring arranged as a trimer of dimers.

It catalyses the reaction tRNA(n+1) + phosphate = tRNA(n) + a ribonucleoside 5'-diphosphate. Functionally, phosphorolytic 3'-5' exoribonuclease that plays an important role in tRNA 3'-end maturation. Removes nucleotide residues following the 3'-CCA terminus of tRNAs; can also add nucleotides to the ends of RNA molecules by using nucleoside diphosphates as substrates, but this may not be physiologically important. Probably plays a role in initiation of 16S rRNA degradation (leading to ribosome degradation) during starvation. The polypeptide is Ribonuclease PH (Clostridium perfringens (strain SM101 / Type A)).